The primary structure comprises 396 residues: Elongation factor Tu (396 aa).

One can recognise a tr-type G domain in the interval 10–205; the sequence is KPHVNIGTIG…ACDDSIPDPE (196 aa). Residues 19 to 26 are G1; the sequence is GHVDHGKT. A GTP-binding site is contributed by 19-26; that stretch reads GHVDHGKT. Threonine 26 lines the Mg(2+) pocket. The G2 stretch occupies residues 62 to 66; sequence GITIN. The segment at 83 to 86 is G3; it reads DAPG. GTP is bound by residues 83-87 and 138-141; these read DAPGH and NKCD. The tract at residues 138 to 141 is G4; the sequence is NKCD. Residues 175 to 177 are G5; the sequence is SAL.

This sequence belongs to the TRAFAC class translation factor GTPase superfamily. Classic translation factor GTPase family. EF-Tu/EF-1A subfamily. As to quaternary structure, monomer.

The protein localises to the cytoplasm. It catalyses the reaction GTP + H2O = GDP + phosphate + H(+). GTP hydrolase that promotes the GTP-dependent binding of aminoacyl-tRNA to the A-site of ribosomes during protein biosynthesis. The polypeptide is Elongation factor Tu (Corynebacterium diphtheriae (strain ATCC 700971 / NCTC 13129 / Biotype gravis)).